Reading from the N-terminus, the 146-residue chain is Acireductone dioxygenase (146 aa).

Residues His-71, His-73, Glu-77, and His-116 each contribute to the Fe(2+) site. Residues His-71, His-73, Glu-77, and His-116 each coordinate Ni(2+).

This sequence belongs to the acireductone dioxygenase (ARD) family. Requires Fe(2+) as cofactor. It depends on Ni(2+) as a cofactor.

It is found in the cytoplasm. It localises to the nucleus. It catalyses the reaction 1,2-dihydroxy-5-(methylsulfanyl)pent-1-en-3-one + O2 = 4-methylsulfanyl-2-oxobutanoate + formate + 2 H(+). It carries out the reaction 1,2-dihydroxy-5-(methylsulfanyl)pent-1-en-3-one + O2 = 3-(methylsulfanyl)propanoate + CO + formate + 2 H(+). The protein operates within amino-acid biosynthesis; L-methionine biosynthesis via salvage pathway; L-methionine from S-methyl-5-thio-alpha-D-ribose 1-phosphate: step 5/6. Functionally, catalyzes 2 different reactions between oxygen and the acireductone 1,2-dihydroxy-3-keto-5-methylthiopentene (DHK-MTPene) depending upon the metal bound in the active site. Fe-containing acireductone dioxygenase (Fe-ARD) produces formate and 2-keto-4-methylthiobutyrate (KMTB), the alpha-ketoacid precursor of methionine in the methionine recycle pathway. Ni-containing acireductone dioxygenase (Ni-ARD) produces methylthiopropionate, carbon monoxide and formate, and does not lie on the methionine recycle pathway. This is Acireductone dioxygenase from Heterostelium pallidum (strain ATCC 26659 / Pp 5 / PN500) (Cellular slime mold).